The primary structure comprises 83 residues: UPF0346 protein M28_Spy0369 (83 aa).

Belongs to the UPF0346 family.

The sequence is that of UPF0346 protein M28_Spy0369 from Streptococcus pyogenes serotype M28 (strain MGAS6180).